The following is a 1499-amino-acid chain: DNA-directed RNA polymerase subunit beta' (1499 aa).

Cys-67, Cys-69, Cys-82, and Cys-85 together coordinate Zn(2+). Residues Asp-499, Asp-501, and Asp-503 each contribute to the Mg(2+) site. Positions 867, 943, 950, and 953 each coordinate Zn(2+).

The protein belongs to the RNA polymerase beta' chain family. As to quaternary structure, the RNAP catalytic core consists of 2 alpha, 1 beta, 1 beta' and 1 omega subunit. When a sigma factor is associated with the core the holoenzyme is formed, which can initiate transcription. Mg(2+) is required as a cofactor. The cofactor is Zn(2+).

It carries out the reaction RNA(n) + a ribonucleoside 5'-triphosphate = RNA(n+1) + diphosphate. Functionally, DNA-dependent RNA polymerase catalyzes the transcription of DNA into RNA using the four ribonucleoside triphosphates as substrates. The protein is DNA-directed RNA polymerase subunit beta' of Prosthecochloris aestuarii (strain DSM 271 / SK 413).